The sequence spans 103 residues: Acylphosphatase-2 (103 aa).

S2 carries the N-acetylserine modification. Residues 13 to 103 (SVDYEVFGRV…LDFSGFSTRY (91 aa)) enclose the Acylphosphatase-like domain. Residues R28 and N46 contribute to the active site.

The protein belongs to the acylphosphatase family.

The catalysed reaction is an acyl phosphate + H2O = a carboxylate + phosphate + H(+). Its function is as follows. Its physiological role is not yet clear. In Gallus gallus (Chicken), this protein is Acylphosphatase-2 (ACYP2).